A 484-amino-acid polypeptide reads, in one-letter code: Suppressor of fused homolog (484 aa).

The interval 1-24 (MAELRPSGAPGPTAPPAPGPTAPP) is disordered. The segment covering 12-23 (PTAPPAPGPTAP) has biased composition (pro residues). Residue Lys-257 forms a Glycyl lysine isopeptide (Lys-Gly) (interchain with G-Cter in ubiquitin) linkage. The tract at residues 279–360 (SRPPEDDEDS…SSTAIIPHEL (82 aa)) is disordered. Ser-301 carries the phosphoserine modification. Lys-303 is modified (N6-acetyllysine). Lys-321 is covalently cross-linked (Glycyl lysine isopeptide (Lys-Gly) (interchain with G-Cter in SUMO2)). Over residues 336–347 (AHDRAPSRKDSL) the composition is skewed to basic and acidic residues. Ser-342, Ser-346, and Ser-352 each carry phosphoserine. The residue at position 353 (Thr-353) is a Phosphothreonine. Ser-481 is subject to Phosphoserine.

The protein belongs to the SUFU family. May form homodimers. Part of a DNA-bound corepressor complex containing SAP18, GLI1 and SIN3. Part of a complex containing CTNNB1. Binds BTRC, GLI2, GLI3, SAP18 and STK36. Binds both free and DNA-bound GLI1. Interacts with KIF7. Interacts with GLI3FL and this interaction regulates the formation of either repressor or activator forms of GLI3. Its association with GLI3FL is regulated by Hh signaling and dissociation of the SUFU-GLI3 interaction requires the presence of the ciliary motor KIF3A. Interacts with ULK3; inactivating the protein kinase activity of ULK3. Interacts with RAB23. In terms of processing, polyubiquitinated at Lys-257 by the SCF(FBXL17) complex, leading to its subsequent degradation and allowing the release of GLI1 for proper hedgehog/smoothened signal transduction. Ubiquitination is impaired by phosphorylation at Ser-342, Ser-346, Ser-352 and Thr-353. Phosphorylation at Ser-342, Ser-346, Ser-352 and Thr-353 prevents ubiquitination by the SCF(FBXL17) complex. In terms of tissue distribution, ubiquitous in adult tissues. Detected in osteoblasts of the perichondrium in the developing limb of 12-week old embryos. Isoform 1 is detected in fetal brain, lung, kidney and testis. Isoform 2 is detected in fetal testis, and at much lower levels in fetal brain, lung and kidney.

The protein localises to the cytoplasm. It is found in the nucleus. Negative regulator in the hedgehog/smoothened signaling pathway. Down-regulates GLI1-mediated transactivation of target genes. Down-regulates GLI2-mediated transactivation of target genes. Part of a corepressor complex that acts on DNA-bound GLI1. May also act by linking GLI1 to BTRC and thereby targeting GLI1 to degradation by the proteasome. Sequesters GLI1, GLI2 and GLI3 in the cytoplasm, this effect is overcome by binding of STK36 to both SUFU and a GLI protein. Negative regulator of beta-catenin signaling. Regulates the formation of either the repressor form (GLI3R) or the activator form (GLI3A) of the full-length form of GLI3 (GLI3FL). GLI3FL is complexed with SUFU in the cytoplasm and is maintained in a neutral state. Without the Hh signal, the SUFU-GLI3 complex is recruited to cilia, leading to the efficient processing of GLI3FL into GLI3R. When Hh signaling is initiated, SUFU dissociates from GLI3FL and the latter translocates to the nucleus, where it is phosphorylated, destabilized, and converted to a transcriptional activator (GLI3A). Required for normal embryonic development. Required for the proper formation of hair follicles and the control of epidermal differentiation. In Homo sapiens (Human), this protein is Suppressor of fused homolog.